Consider the following 253-residue polypeptide: MLIEQFICRKDNFGVLIHDEKSGMTAAIDAPESKAIHNALKRRNWTLHTIFVTHHHHDHVEALAELKQVYNAIVFGPAAEKNKIYHLDQTLQSDEKLLFGSQSLLALSTPGHTLGALSYYFPEKKLLFAGDTLFSLGCGRLFEGTAVQMLNSLKKLCKLPDETLLYCGHEYTKNNALFALTLDPHNQKLQQRAEEVLSLRAKNAMTLPVTLGQEKATNPFLRWNDPAIRKNLSMKDSTDEEVFAEIRKRKDNF.

Residues His-54, His-56, Asp-58, His-59, His-112, Asp-131, and His-169 each contribute to the Zn(2+) site.

This sequence belongs to the metallo-beta-lactamase superfamily. Glyoxalase II family. Monomer. Zn(2+) is required as a cofactor.

The enzyme catalyses an S-(2-hydroxyacyl)glutathione + H2O = a 2-hydroxy carboxylate + glutathione + H(+). It participates in secondary metabolite metabolism; methylglyoxal degradation; (R)-lactate from methylglyoxal: step 2/2. Its function is as follows. Thiolesterase that catalyzes the hydrolysis of S-D-lactoyl-glutathione to form glutathione and D-lactic acid. This Bartonella tribocorum (strain CIP 105476 / IBS 506) protein is Hydroxyacylglutathione hydrolase.